The following is a 164-amino-acid chain: Leucine-rich single-pass membrane protein 2 (164 aa).

Residues 97–117 form a helical membrane-spanning segment; sequence GFLLLLALLVLTCLVLALLAV.

It is found in the membrane. This Homo sapiens (Human) protein is Leucine-rich single-pass membrane protein 2 (LSMEM2).